The sequence spans 38 residues: MSGPNPNKQPVELNRTSLFWGLLLIFVLAVLFSSYFFN.

A helical membrane pass occupies residues 17–37 (SLFWGLLLIFVLAVLFSSYFF).

The protein belongs to the PsbL family. In terms of assembly, PSII is composed of 1 copy each of membrane proteins PsbA, PsbB, PsbC, PsbD, PsbE, PsbF, PsbH, PsbI, PsbJ, PsbK, PsbL, PsbM, PsbT, PsbX, PsbY, PsbZ, Psb30/Ycf12, at least 3 peripheral proteins of the oxygen-evolving complex and a large number of cofactors. It forms dimeric complexes.

The protein resides in the plastid. The protein localises to the chloroplast thylakoid membrane. Functionally, one of the components of the core complex of photosystem II (PSII). PSII is a light-driven water:plastoquinone oxidoreductase that uses light energy to abstract electrons from H(2)O, generating O(2) and a proton gradient subsequently used for ATP formation. It consists of a core antenna complex that captures photons, and an electron transfer chain that converts photonic excitation into a charge separation. This subunit is found at the monomer-monomer interface and is required for correct PSII assembly and/or dimerization. The chain is Photosystem II reaction center protein L from Rhodomonas salina (Cryptomonas salina).